We begin with the raw amino-acid sequence, 286 residues long: ATP synthase gamma chain (286 aa).

This sequence belongs to the ATPase gamma chain family. As to quaternary structure, F-type ATPases have 2 components, CF(1) - the catalytic core - and CF(0) - the membrane proton channel. CF(1) has five subunits: alpha(3), beta(3), gamma(1), delta(1), epsilon(1). CF(0) has three main subunits: a, b and c.

The protein localises to the cell inner membrane. Produces ATP from ADP in the presence of a proton gradient across the membrane. The gamma chain is believed to be important in regulating ATPase activity and the flow of protons through the CF(0) complex. The polypeptide is ATP synthase gamma chain (Shewanella baltica (strain OS223)).